Reading from the N-terminus, the 201-residue chain is Recombination protein RecR (201 aa).

Residues 60–75 (CKVCGNIDTQNPCTVC) form a C4-type zinc finger. The Toprim domain occupies 83–178 (SIIVVVADVA…KVTRLAHGVP (96 aa)).

It belongs to the RecR family.

In terms of biological role, may play a role in DNA repair. It seems to be involved in an RecBC-independent recombinational process of DNA repair. It may act with RecF and RecO. The chain is Recombination protein RecR from Rhodopseudomonas palustris (strain BisB18).